A 364-amino-acid chain; its full sequence is Spermidine/putrescine import ATP-binding protein PotA (364 aa).

The region spanning 5–235 (LSFKGVTKGF…PVNRFVADFI (231 aa)) is the ABC transporter domain. 37-44 (GPSGCGKT) serves as a coordination point for ATP.

The protein belongs to the ABC transporter superfamily. Spermidine/putrescine importer (TC 3.A.1.11.1) family. In terms of assembly, the complex is composed of two ATP-binding proteins (PotA), two transmembrane proteins (PotB and PotC) and a solute-binding protein (PotD).

The protein localises to the cell membrane. It catalyses the reaction ATP + H2O + polyamine-[polyamine-binding protein]Side 1 = ADP + phosphate + polyamineSide 2 + [polyamine-binding protein]Side 1.. Functionally, part of the ABC transporter complex PotABCD involved in spermidine/putrescine import. Responsible for energy coupling to the transport system. The chain is Spermidine/putrescine import ATP-binding protein PotA from Staphylococcus haemolyticus (strain JCSC1435).